We begin with the raw amino-acid sequence, 123 residues long: Large ribosomal subunit protein bL19 (123 aa).

The protein belongs to the bacterial ribosomal protein bL19 family.

In terms of biological role, this protein is located at the 30S-50S ribosomal subunit interface and may play a role in the structure and function of the aminoacyl-tRNA binding site. In Laribacter hongkongensis (strain HLHK9), this protein is Large ribosomal subunit protein bL19.